Here is a 679-residue protein sequence, read N- to C-terminus: Glycine--tRNA ligase beta subunit (679 aa).

The protein belongs to the class-II aminoacyl-tRNA synthetase family. In terms of assembly, tetramer of two alpha and two beta subunits.

It is found in the cytoplasm. The catalysed reaction is tRNA(Gly) + glycine + ATP = glycyl-tRNA(Gly) + AMP + diphosphate. The sequence is that of Glycine--tRNA ligase beta subunit from Streptococcus pyogenes serotype M2 (strain MGAS10270).